The following is a 355-amino-acid chain: Peptide chain release factor 1 (355 aa).

An N5-methylglutamine modification is found at Gln-233.

It belongs to the prokaryotic/mitochondrial release factor family. Post-translationally, methylated by PrmC. Methylation increases the termination efficiency of RF1.

It localises to the cytoplasm. Functionally, peptide chain release factor 1 directs the termination of translation in response to the peptide chain termination codons UAG and UAA. The polypeptide is Peptide chain release factor 1 (Caldicellulosiruptor bescii (strain ATCC BAA-1888 / DSM 6725 / KCTC 15123 / Z-1320) (Anaerocellum thermophilum)).